Consider the following 242-residue polypeptide: MLLGVNIDHIATVRNARGTTYPSPVEAALVAETHGADLITMHLREDRRHIKDADVFAVKNAIRTRLNLEMALTEEMLENALKVMPEDVCIVPEKRQEITTEGGLDVLAQQDKIAEFTKILTDAGIRVSLFIDADDRQIQAARDVGAPVVELHTGAYADARSHAEQIRQFERIQNGAHFASDLGLVVNAGHGLTIHNVTPIAQILAIRELNIGHSLISQALFLGLPEAVRQMKEAMFRARLLP.

Asparagine 6 is a binding site for 3-amino-2-oxopropyl phosphate. 8 to 9 is a 1-deoxy-D-xylulose 5-phosphate binding site; the sequence is DH. Arginine 17 lines the 3-amino-2-oxopropyl phosphate pocket. Residue histidine 42 is the Proton acceptor of the active site. Arginine 44 and histidine 49 together coordinate 1-deoxy-D-xylulose 5-phosphate. Glutamate 69 (proton acceptor) is an active-site residue. Threonine 99 lines the 1-deoxy-D-xylulose 5-phosphate pocket. Histidine 190 functions as the Proton donor in the catalytic mechanism. Residues glycine 191 and 212 to 213 each bind 3-amino-2-oxopropyl phosphate; that span reads GH.

This sequence belongs to the PNP synthase family. As to quaternary structure, homooctamer; tetramer of dimers.

Its subcellular location is the cytoplasm. It catalyses the reaction 3-amino-2-oxopropyl phosphate + 1-deoxy-D-xylulose 5-phosphate = pyridoxine 5'-phosphate + phosphate + 2 H2O + H(+). It functions in the pathway cofactor biosynthesis; pyridoxine 5'-phosphate biosynthesis; pyridoxine 5'-phosphate from D-erythrose 4-phosphate: step 5/5. Functionally, catalyzes the complicated ring closure reaction between the two acyclic compounds 1-deoxy-D-xylulose-5-phosphate (DXP) and 3-amino-2-oxopropyl phosphate (1-amino-acetone-3-phosphate or AAP) to form pyridoxine 5'-phosphate (PNP) and inorganic phosphate. The chain is Pyridoxine 5'-phosphate synthase from Neisseria meningitidis serogroup A / serotype 4A (strain DSM 15465 / Z2491).